Here is a 269-residue protein sequence, read N- to C-terminus: Shikimate dehydrogenase (NADP(+)) (269 aa).

Shikimate is bound by residues 14-16 (SVS) and Thr61. Residue Lys65 is the Proton acceptor of the active site. The shikimate site is built by Asn85 and Asp98. NADP(+)-binding positions include 120 to 124 (GAGGA), 143 to 148 (NRTEEK), and Thr211. Residue Tyr213 participates in shikimate binding. Gly234 is an NADP(+) binding site.

Belongs to the shikimate dehydrogenase family. Homodimer.

The catalysed reaction is shikimate + NADP(+) = 3-dehydroshikimate + NADPH + H(+). It functions in the pathway metabolic intermediate biosynthesis; chorismate biosynthesis; chorismate from D-erythrose 4-phosphate and phosphoenolpyruvate: step 4/7. Its function is as follows. Involved in the biosynthesis of the chorismate, which leads to the biosynthesis of aromatic amino acids. Catalyzes the reversible NADPH linked reduction of 3-dehydroshikimate (DHSA) to yield shikimate (SA). This Archaeoglobus fulgidus (strain ATCC 49558 / DSM 4304 / JCM 9628 / NBRC 100126 / VC-16) protein is Shikimate dehydrogenase (NADP(+)).